Consider the following 223-residue polypeptide: Endonuclease V (223 aa).

Residues D45 and D113 each contribute to the Mg(2+) site.

Belongs to the endonuclease V family. Mg(2+) is required as a cofactor.

It is found in the cytoplasm. The catalysed reaction is Endonucleolytic cleavage at apurinic or apyrimidinic sites to products with a 5'-phosphate.. Functionally, DNA repair enzyme involved in the repair of deaminated bases. Selectively cleaves double-stranded DNA at the second phosphodiester bond 3' to a deoxyinosine leaving behind the intact lesion on the nicked DNA. The protein is Endonuclease V of Dehalococcoides mccartyi (strain CBDB1).